A 334-amino-acid chain; its full sequence is Ribosomal RNA small subunit methyltransferase H (334 aa).

S-adenosyl-L-methionine contacts are provided by residues 53-55 (GGH), Asp72, Phe99, Asp122, and His129.

Belongs to the methyltransferase superfamily. RsmH family.

The protein resides in the cytoplasm. It carries out the reaction cytidine(1402) in 16S rRNA + S-adenosyl-L-methionine = N(4)-methylcytidine(1402) in 16S rRNA + S-adenosyl-L-homocysteine + H(+). Its function is as follows. Specifically methylates the N4 position of cytidine in position 1402 (C1402) of 16S rRNA. This chain is Ribosomal RNA small subunit methyltransferase H, found in Leptospira interrogans serogroup Icterohaemorrhagiae serovar copenhageni (strain Fiocruz L1-130).